A 470-amino-acid chain; its full sequence is Pancreatic lipase-related protein 2 (470 aa).

Positions 1–18 (MMLFVWTTGLLLLATARG) are cleaved as a signal peptide. Cysteines 22 and 28 form a disulfide. The tract at residues 94-106 (IHGFIDNGEKDWL) is required for galactolipase activity. A disulfide bridge connects residues C110 and C121. S172 functions as the Nucleophile in the catalytic mechanism. Catalysis depends on D196, which acts as the Charge relay system. 4 residues coordinate Ca(2+): E207, R210, D212, and D215. Residues C257 and C281 are joined by a disulfide bond. Residues 258–280 (EKNIISTIVDVNGFLEGITSLAA) form a required for galactolipase activity region. H283 serves as the catalytic Charge relay system. 2 cysteine pairs are disulfide-bonded: C305/C316 and C319/C324. 2 N-linked (GlcNAc...) asparagine glycosylation sites follow: N354 and N429. Residues 358 to 470 (WRYKVSVTLS…EDVLQSLSPC (113 aa)) form the PLAT domain. C454 and C470 are joined by a disulfide.

It belongs to the AB hydrolase superfamily. Lipase family. As to expression, pancreas.

It is found in the secreted. It localises to the zymogen granule membrane. Its subcellular location is the cell projection. The protein localises to the neuron projection. The catalysed reaction is a triacylglycerol + H2O = a diacylglycerol + a fatty acid + H(+). It catalyses the reaction a 1,2-diacyl-3-O-(beta-D-galactosyl)-sn-glycerol + 2 H2O = 3-beta-D-galactosyl-sn-glycerol + 2 a fatty acid + 2 H(+). The enzyme catalyses 1,2,3-tri-(9Z-octadecenoyl)-glycerol + H2O = di-(9Z)-octadecenoylglycerol + (9Z)-octadecenoate + H(+). It carries out the reaction di-(9Z)-octadecenoylglycerol + H2O = (9Z-octadecenoyl)-glycerol + (9Z)-octadecenoate + H(+). The catalysed reaction is (9Z-octadecenoyl)-glycerol + H2O = glycerol + (9Z)-octadecenoate + H(+). It catalyses the reaction 1-(9Z-octadecenoyl)-glycerol + H2O = glycerol + (9Z)-octadecenoate + H(+). The enzyme catalyses 1,2,3-tripropanoylglycerol + H2O = dipropanoylglycerol + propanoate + H(+). It carries out the reaction 1,2,3-tributanoylglycerol + H2O = dibutanoylglycerol + butanoate + H(+). The catalysed reaction is 1,2,3-trioctanoylglycerol + H2O = dioctanoylglycerol + octanoate + H(+). It catalyses the reaction 1,2-didecanoylglycerol + H2O = decanoylglycerol + decanoate + H(+). The enzyme catalyses long chain 1,2-diacyl-3-O-beta-D-galactosyl-sn-glycerol + H2O = long chain acyl-3-O-beta-D-galactosyl-sn-glycerol + a fatty acid + H(+). It carries out the reaction 1,2-dioctanoyl-3-O-beta-D-galactosyl-sn-glycerol + H2O = octanoyl-3-(beta-D-galactosyl)-sn-glycerol + octanoate + H(+). The catalysed reaction is 1,2-didodecanoyl-3-beta-D-galactosyl-sn-glycerol + H2O = dodecanoyl-3-beta-D-galactosyl-sn-glycerol + dodecanoate + H(+). It catalyses the reaction 1-beta-D-galactosyl-2,3-didodecanoyl-sn-glycerol + H2O = 1-beta-D-galactosyl-dodecanoyl-sn-glycerol + dodecanoate + H(+). The enzyme catalyses a 1,2-diacyl-3-O-[alpha-D-galactosyl-(1-&gt;6)-beta-D-galactosyl]-sn-glycerol + H2O = acyl-3-O-[alpha-D-galactosyl-(1-&gt;6)-beta-D-galactosyl]-sn-glycerol + a fatty acid + H(+). It carries out the reaction long chain 1,2-diacyl-3-O-[alpha-D-galactosyl-(1-&gt;6)-beta-D-galactosyl]-sn-glycerol + H2O = long chain acyl-3-O-[alpha-D-galactosyl-(1-&gt;6)-beta-D-galactosyl]-sn-glycerol + a fatty acid + H(+). The catalysed reaction is 1,2-dioctanoyl-3-O-[alpha-D-galactosyl-(1-&gt;6)-beta-D-galactosyl]-sn-glycerol + H2O = octanoyl-3-O-[alpha-D-galactosyl-(1-&gt;6)-beta-D-galactosyl]-sn-glycerol + octanoate + H(+). It catalyses the reaction 1,2-didodecanoyl-3-O-[alpha-D-galactosyl-(1-&gt;6)-beta-D-galactosyl]-sn-glycerol + H2O = dodecanoyl-3-O-[alpha-D-galactosyl-(1-&gt;6)-beta-D-galactosyl]-sn-glycerol + dodecanoate + H(+). The enzyme catalyses a 1,2-diacyl-sn-glycero-3-phosphocholine + H2O = a monoacyl-sn-glycero-3-phosphocholine + a fatty acid + H(+). It participates in glycerolipid metabolism; triacylglycerol degradation. The protein operates within glycolipid metabolism. Triacylglycerol lipase activity is inhibited by increasing bile salts concentrations and not reactivated by CLPS. Functionally, lipase that primarily hydrolyzes triglycerides and galactosylglycerides. In neonates, may play a major role in pancreatic digestion of dietary fats such as milk fat globules enriched in long-chain triglycerides. Hydrolyzes short-, medium- and long-chain fatty acyls in triglycerides without apparent positional specificity. Can completely deacylate triacylglycerols. When the liver matures and bile salt synthesis increases, likely functions mainly as a galactolipase and monoacylglycerol lipase. Hydrolyzes monogalactosyldiglycerols (MGDG) and digalactosyldiacylglycerols (DGDG) present in a plant-based diet, releasing long-chain polyunsaturated fatty acids. Hydrolyzes medium- and long-chain fatty acyls in galactolipids. May act together with LIPF to hydrolyze partially digested triglycerides. Hydrolyzes long-chain monoglycerides with high efficiency. In cytotoxic T cells, contributes to perforin-dependent cell lysis, but is unlikely to mediate direct cytotoxicity. Also has low phospholipase activity. In neurons, required for the localization of the phospholipid 1-oleoyl-2-palmitoyl-PC (OPPC) to neurite tips through acyl chain remodeling of membrane phospholipids. The resulting OPPC-rich lipid membrane domain recruits the t-SNARE protein STX4 by selectively interacting with the STX4 transmembrane domain and this promotes surface expression of the dopamine transporter SLC6A3/DAT at neurite tips by facilitating fusion of SLC6A3-containing transport vesicles with the plasma membrane. The polypeptide is Pancreatic lipase-related protein 2 (Myocastor coypus (Coypu)).